A 369-amino-acid polypeptide reads, in one-letter code: Homoserine O-succinyltransferase (369 aa).

Residues 1–21 (MVRIVPSARRTRAPAKLDGRS) are disordered. The AB hydrolase-1 domain maps to 86-350 (VVFVAGGISA…PFGHDAFLKE (265 aa)). Residues 92–95 (GISA) are important for substrate specificity. Ser-172 serves as the catalytic Nucleophile. Arg-233 contributes to the substrate binding site. Residues Asp-314 and His-344 contribute to the active site. Asp-345 contributes to the substrate binding site.

It belongs to the AB hydrolase superfamily. MetX family. As to quaternary structure, homodimer.

Its subcellular location is the cytoplasm. The catalysed reaction is L-homoserine + succinyl-CoA = O-succinyl-L-homoserine + CoA. The protein operates within amino-acid biosynthesis; L-methionine biosynthesis via de novo pathway; O-succinyl-L-homoserine from L-homoserine: step 1/1. Its function is as follows. Transfers a succinyl group from succinyl-CoA to L-homoserine, forming succinyl-L-homoserine. The sequence is that of Homoserine O-succinyltransferase from Xanthomonas campestris pv. campestris (strain ATCC 33913 / DSM 3586 / NCPPB 528 / LMG 568 / P 25).